Here is a 475-residue protein sequence, read N- to C-terminus: MDQEESHVISIFETLGAYFINIFYNFLYKNALYKKHSIVTEYQYQVKGYILGVKQNKKLYEKMLDSFYKYFCNITQINSKTLNFSNFITTIVDSFIPKEYSQSISLEKKESILELLLCDYISNLGTFITTEKMLPFIIKNRKENYHKVTKEMQDYSLTFLLKKRMELYNKFLRKQAYVEPETELEETYARLSSYNRSLLHQIEELTSEKKSLLADLSTLRKKYEKRQSEYRRLVQLLYQQIQRSSTSKSSYPLTKFIETLPSEHFSNEEYQKETPADQKEVVEMELLRKQELLTSQELTSKSPNNYPVPHSRTIVSKPPDNYPVPRSRTTTKLDFDNSLQNQELHTKNGFSEKDIVEFGQDKPEEENILAIDQDKPEEENILAIKQDIPEEENILAIDQDKPEFNQDTPEFKEAVLDTKENILEEENQDEPIVQNPFLENFWKPEQKTFNQSGLFEESSNFSNDWSGGDVTLNFS.

A helical transmembrane segment spans residues 7-28; sequence HVISIFETLGAYFINIFYNFLY. N-linked (GlcNAc...) asparagine; by host glycosylation is found at Asn-73, Asn-83, and Asn-195. Residues 183–233 adopt a coiled-coil conformation; the sequence is ELEETYARLSSYNRSLLHQIEELTSEKKSLLADLSTLRKKYEKRQSEYRRL. Polar residues predominate over residues 295-305; the sequence is SQELTSKSPNN. The tract at residues 295–324 is disordered; the sequence is SQELTSKSPNNYPVPHSRTIVSKPPDNYPV. N-linked (GlcNAc...) asparagine; by host glycosylation is found at Asn-450 and Asn-460.

This sequence belongs to the asfivirus B475L family.

It is found in the host membrane. This is an uncharacterized protein from Ornithodoros (relapsing fever ticks).